A 178-amino-acid polypeptide reads, in one-letter code: MKTKSPQDDRILALAEPVAAELALEVVRVRIMSGKRPRLQIMADRTNGTGIEVEDCARFSRALSEVFEVEDPVAGEYDLEVSSPGIDRPLTTLPHFERWEGNEVKIELDRLAEGRKRFRGILAGVEDGHVGLDMDGEDDTTMIPFDWIVEAKLVLTDALIEADLKARGRGAATTEGDE.

The protein belongs to the RimP family.

It localises to the cytoplasm. Its function is as follows. Required for maturation of 30S ribosomal subunits. The polypeptide is Ribosome maturation factor RimP (Maricaulis maris (strain MCS10) (Caulobacter maris)).